Here is a 143-residue protein sequence, read N- to C-terminus: Large ribosomal subunit protein uL11 (143 aa).

It belongs to the universal ribosomal protein uL11 family. As to quaternary structure, part of the ribosomal stalk of the 50S ribosomal subunit. Interacts with L10 and the large rRNA to form the base of the stalk. L10 forms an elongated spine to which L12 dimers bind in a sequential fashion forming a multimeric L10(L12)X complex. One or more lysine residues are methylated.

In terms of biological role, forms part of the ribosomal stalk which helps the ribosome interact with GTP-bound translation factors. The protein is Large ribosomal subunit protein uL11 of Delftia acidovorans (strain DSM 14801 / SPH-1).